The following is a 94-amino-acid chain: DNA gyrase subunit A (94 aa).

The region spanning 35–94 (LPDVRDGLKPVHRRILYGLNEQGMTPDKPYKKSARIVGDVMGKYHPHGDSSIYEAMVRMA) is the Topo IIA-type catalytic domain.

Belongs to the type II topoisomerase GyrA/ParC subunit family. Heterotetramer, composed of two GyrA and two GyrB chains. In the heterotetramer, GyrA contains the active site tyrosine that forms a transient covalent intermediate with DNA, while GyrB binds cofactors and catalyzes ATP hydrolysis.

It localises to the cytoplasm. It carries out the reaction ATP-dependent breakage, passage and rejoining of double-stranded DNA.. Its function is as follows. A type II topoisomerase that negatively supercoils closed circular double-stranded (ds) DNA in an ATP-dependent manner to modulate DNA topology and maintain chromosomes in an underwound state. Negative supercoiling favors strand separation, and DNA replication, transcription, recombination and repair, all of which involve strand separation. Also able to catalyze the interconversion of other topological isomers of dsDNA rings, including catenanes and knotted rings. Type II topoisomerases break and join 2 DNA strands simultaneously in an ATP-dependent manner. The protein is DNA gyrase subunit A of Staphylococcus epidermidis.